The chain runs to 376 residues: Deoxyuridine 5'-triphosphate nucleotidohydrolase (376 aa).

This sequence belongs to the dUTPase family. The cofactor is Mg(2+).

The catalysed reaction is dUTP + H2O = dUMP + diphosphate + H(+). Its function is as follows. Involved in nucleotide metabolism: produces dUMP, the immediate precursor of thymidine nucleotides and decreases the intracellular concentration of dUTP to avoid uracil incorporation into viral DNA. The protein is Deoxyuridine 5'-triphosphate nucleotidohydrolase of Homo sapiens (Human).